The primary structure comprises 249 residues: Ribonucleoprotein 1 (249 aa).

RRM domains lie at Arg-35 to Thr-114 and Asn-140 to Ala-231.

This chain is Ribonucleoprotein 1 (RNP1), found in Saccharomyces cerevisiae (strain ATCC 204508 / S288c) (Baker's yeast).